Consider the following 468-residue polypeptide: ATP synthase subunit beta (468 aa).

Residue 155–162 coordinates ATP; sequence GGAGVGKT.

It belongs to the ATPase alpha/beta chains family. F-type ATPases have 2 components, CF(1) - the catalytic core - and CF(0) - the membrane proton channel. CF(1) has five subunits: alpha(3), beta(3), gamma(1), delta(1), epsilon(1). CF(0) has three main subunits: a(1), b(2) and c(9-12). The alpha and beta chains form an alternating ring which encloses part of the gamma chain. CF(1) is attached to CF(0) by a central stalk formed by the gamma and epsilon chains, while a peripheral stalk is formed by the delta and b chains.

It localises to the cell inner membrane. The enzyme catalyses ATP + H2O + 4 H(+)(in) = ADP + phosphate + 5 H(+)(out). Functionally, produces ATP from ADP in the presence of a proton gradient across the membrane. The catalytic sites are hosted primarily by the beta subunits. This chain is ATP synthase subunit beta, found in Bdellovibrio bacteriovorus (strain ATCC 15356 / DSM 50701 / NCIMB 9529 / HD100).